A 236-amino-acid polypeptide reads, in one-letter code: Phosphoribosylformylglycinamidine synthase subunit PurQ (236 aa).

One can recognise a Glutamine amidotransferase type-1 domain in the interval 2–234 (RFAVVTFPGS…LSVGLEVAHS (233 aa)). Cys86 (nucleophile) is an active-site residue. Residues His203 and Glu205 contribute to the active site.

As to quaternary structure, part of the FGAM synthase complex composed of 1 PurL, 1 PurQ and 2 PurS subunits.

Its subcellular location is the cytoplasm. The catalysed reaction is N(2)-formyl-N(1)-(5-phospho-beta-D-ribosyl)glycinamide + L-glutamine + ATP + H2O = 2-formamido-N(1)-(5-O-phospho-beta-D-ribosyl)acetamidine + L-glutamate + ADP + phosphate + H(+). It catalyses the reaction L-glutamine + H2O = L-glutamate + NH4(+). It participates in purine metabolism; IMP biosynthesis via de novo pathway; 5-amino-1-(5-phospho-D-ribosyl)imidazole from N(2)-formyl-N(1)-(5-phospho-D-ribosyl)glycinamide: step 1/2. In terms of biological role, part of the phosphoribosylformylglycinamidine synthase complex involved in the purines biosynthetic pathway. Catalyzes the ATP-dependent conversion of formylglycinamide ribonucleotide (FGAR) and glutamine to yield formylglycinamidine ribonucleotide (FGAM) and glutamate. The FGAM synthase complex is composed of three subunits. PurQ produces an ammonia molecule by converting glutamine to glutamate. PurL transfers the ammonia molecule to FGAR to form FGAM in an ATP-dependent manner. PurS interacts with PurQ and PurL and is thought to assist in the transfer of the ammonia molecule from PurQ to PurL. The protein is Phosphoribosylformylglycinamidine synthase subunit PurQ of Thermomicrobium roseum (strain ATCC 27502 / DSM 5159 / P-2).